The chain runs to 334 residues: Probable fructose-bisphosphate aldolase class 1 (334 aa).

The protein belongs to the class I fructose-bisphosphate aldolase family.

It carries out the reaction beta-D-fructose 1,6-bisphosphate = D-glyceraldehyde 3-phosphate + dihydroxyacetone phosphate. Its pathway is carbohydrate degradation; glycolysis; D-glyceraldehyde 3-phosphate and glycerone phosphate from D-glucose: step 4/4. This is Probable fructose-bisphosphate aldolase class 1 from Xylella fastidiosa (strain Temecula1 / ATCC 700964).